A 357-amino-acid polypeptide reads, in one-letter code: Glutamine synthetase cytosolic isozyme (357 aa).

One can recognise a GS beta-grasp domain in the interval 20-100 (VIAEYIWIGG…VICDAYSPNG (81 aa)). The region spanning 107–357 (KRAAAAKIFN…IAETTILWKP (251 aa)) is the GS catalytic domain.

It belongs to the glutamine synthetase family. Homooctamer.

Its subcellular location is the cytoplasm. It catalyses the reaction L-glutamate + NH4(+) + ATP = L-glutamine + ADP + phosphate + H(+). In Pinus sylvestris (Scotch pine), this protein is Glutamine synthetase cytosolic isozyme.